Here is a 158-residue protein sequence, read N- to C-terminus: NADH-quinone oxidoreductase subunit B (158 aa).

4 residues coordinate [4Fe-4S] cluster: Cys37, Cys38, Cys102, and Cys132.

Belongs to the complex I 20 kDa subunit family. NDH-1 is composed of 14 different subunits. Subunits NuoB, C, D, E, F, and G constitute the peripheral sector of the complex. It depends on [4Fe-4S] cluster as a cofactor.

It localises to the cell inner membrane. The enzyme catalyses a quinone + NADH + 5 H(+)(in) = a quinol + NAD(+) + 4 H(+)(out). Functionally, NDH-1 shuttles electrons from NADH, via FMN and iron-sulfur (Fe-S) centers, to quinones in the respiratory chain. Couples the redox reaction to proton translocation (for every two electrons transferred, four hydrogen ions are translocated across the cytoplasmic membrane), and thus conserves the redox energy in a proton gradient. This chain is NADH-quinone oxidoreductase subunit B, found in Legionella pneumophila (strain Paris).